The sequence spans 127 residues: Large ribosomal subunit protein uL24 (127 aa).

This sequence belongs to the universal ribosomal protein uL24 family. As to quaternary structure, part of the 50S ribosomal subunit.

One of two assembly initiator proteins, it binds directly to the 5'-end of the 23S rRNA, where it nucleates assembly of the 50S subunit. Its function is as follows. One of the proteins that surrounds the polypeptide exit tunnel on the outside of the subunit. This Leptospira biflexa serovar Patoc (strain Patoc 1 / ATCC 23582 / Paris) protein is Large ribosomal subunit protein uL24.